The following is a 355-amino-acid chain: Holliday junction branch migration complex subunit RuvB (355 aa).

Residues 4–190 (TDKLAAERII…FGIVARLEFY (187 aa)) are large ATPase domain (RuvB-L). Residues L29, R30, G71, K74, T75, T76, 137-139 (EDY), R180, Y190, and R227 each bind ATP. Residue T75 coordinates Mg(2+). Residues 191-261 (DADQLSRIVQ…IADAALAMLD (71 aa)) are small ATPAse domain (RuvB-S). A head domain (RuvB-H) region spans residues 264–355 (PVGFDLMDRK…QSIWDTPDAQ (92 aa)). DNA is bound by residues R300, R319, and R324.

This sequence belongs to the RuvB family. Homohexamer. Forms an RuvA(8)-RuvB(12)-Holliday junction (HJ) complex. HJ DNA is sandwiched between 2 RuvA tetramers; dsDNA enters through RuvA and exits via RuvB. An RuvB hexamer assembles on each DNA strand where it exits the tetramer. Each RuvB hexamer is contacted by two RuvA subunits (via domain III) on 2 adjacent RuvB subunits; this complex drives branch migration. In the full resolvosome a probable DNA-RuvA(4)-RuvB(12)-RuvC(2) complex forms which resolves the HJ.

It localises to the cytoplasm. It catalyses the reaction ATP + H2O = ADP + phosphate + H(+). In terms of biological role, the RuvA-RuvB-RuvC complex processes Holliday junction (HJ) DNA during genetic recombination and DNA repair, while the RuvA-RuvB complex plays an important role in the rescue of blocked DNA replication forks via replication fork reversal (RFR). RuvA specifically binds to HJ cruciform DNA, conferring on it an open structure. The RuvB hexamer acts as an ATP-dependent pump, pulling dsDNA into and through the RuvAB complex. RuvB forms 2 homohexamers on either side of HJ DNA bound by 1 or 2 RuvA tetramers; 4 subunits per hexamer contact DNA at a time. Coordinated motions by a converter formed by DNA-disengaged RuvB subunits stimulates ATP hydrolysis and nucleotide exchange. Immobilization of the converter enables RuvB to convert the ATP-contained energy into a lever motion, pulling 2 nucleotides of DNA out of the RuvA tetramer per ATP hydrolyzed, thus driving DNA branch migration. The RuvB motors rotate together with the DNA substrate, which together with the progressing nucleotide cycle form the mechanistic basis for DNA recombination by continuous HJ branch migration. Branch migration allows RuvC to scan DNA until it finds its consensus sequence, where it cleaves and resolves cruciform DNA. In Burkholderia multivorans (strain ATCC 17616 / 249), this protein is Holliday junction branch migration complex subunit RuvB.